A 366-amino-acid chain; its full sequence is Beta-1,3-glucan-binding protein (366 aa).

An N-terminal signal peptide occupies residues 1–17 (MKGFVASVVLLACGALA). The GH16 domain maps to 18 to 364 (ADIVEPEDCT…YVRVWKMEST (347 aa)). Residue Asn-66 is glycosylated (N-linked (GlcNAc...) asparagine).

It belongs to the glycosyl hydrolase 16 family. Constitutively expressed in hemocytes.

Its subcellular location is the secreted. Its function is as follows. Binds to beta-1,3-glucan. May play a role in recognition of microorganisms and in activation of the prophenoloxidase cascade. The chain is Beta-1,3-glucan-binding protein from Penaeus monodon (Giant tiger prawn).